The primary structure comprises 371 residues: tRNA-specific 2-thiouridylase MnmA (371 aa).

ATP is bound by residues 9-16 and M35; that span reads AMSGGVDS. The active-site Nucleophile is C109. C109 and C207 form a disulfide bridge. Residue G133 coordinates ATP. Residues 157–159 are interaction with tRNA; that stretch reads KDQ. C207 serves as the catalytic Cysteine persulfide intermediate.

Belongs to the MnmA/TRMU family.

It is found in the cytoplasm. The catalysed reaction is S-sulfanyl-L-cysteinyl-[protein] + uridine(34) in tRNA + AH2 + ATP = 2-thiouridine(34) in tRNA + L-cysteinyl-[protein] + A + AMP + diphosphate + H(+). In terms of biological role, catalyzes the 2-thiolation of uridine at the wobble position (U34) of tRNA, leading to the formation of s(2)U34. This chain is tRNA-specific 2-thiouridylase MnmA, found in Solibacter usitatus (strain Ellin6076).